A 462-amino-acid polypeptide reads, in one-letter code: MSLSLWQQCLARLQDELPATEFSMWIRPLQAELSDNTLALYAPNRFVLDWVRDKYLNNINGLLNDFCGTEVPLLRFEVGSKPAARAHNNPVTASVSAPVAPVTRSAPMRPSWDNSPAQPELSYRSNVNPKHTFDNFVEGKSNQLARAAARQVADNPGGAYNPLFLYGGTGLGKTHLLHAVGNGIMARKANAKVVYMHSERFVQDMVKALQNNAIEEFKRYYRSVDALLIDDIQFFANKERSQEEFFHTFNALLEGNQQIILTSDRYPKEINGVEDRLKSRFGWGLTVAIEPPELETRVAILMKKADENDIRLPGEVAFFIAKRLRSNVRELEGALNRVIANANFTGRAITIDFVREALRDLLALQEKLVTIDNIQKTVAEYYKIKVADLLSKRRSRSVARPRQMAMALAKELTNHSLPEIGDAFGGRDHTTVLHACRKIEQLREESHDIKEDFSNLIRTLSS.

Positions 1 to 83 (MSLSLWQQCL…LRFEVGSKPA (83 aa)) are domain I, interacts with DnaA modulators. The tract at residues 83 to 125 (AARAHNNPVTASVSAPVAPVTRSAPMRPSWDNSPAQPELSYRS) is domain II. A disordered region spans residues 104–125 (RSAPMRPSWDNSPAQPELSYRS). The span at 112 to 125 (WDNSPAQPELSYRS) shows a compositional bias: polar residues. Residues 126–342 (NVNPKHTFDN…GALNRVIANA (217 aa)) are domain III, AAA+ region. Gly-170, Gly-172, Lys-173, and Thr-174 together coordinate ATP. Positions 343–462 (NFTGRAITID…FSNLIRTLSS (120 aa)) are domain IV, binds dsDNA.

Belongs to the DnaA family. Oligomerizes as a right-handed, spiral filament on DNA at oriC.

The protein localises to the cytoplasm. Plays an essential role in the initiation and regulation of chromosomal replication. ATP-DnaA binds to the origin of replication (oriC) to initiate formation of the DNA replication initiation complex once per cell cycle. Binds the DnaA box (a 9 base pair repeat at the origin) and separates the double-stranded (ds)DNA. Forms a right-handed helical filament on oriC DNA; dsDNA binds to the exterior of the filament while single-stranded (ss)DNA is stabiized in the filament's interior. The ATP-DnaA-oriC complex binds and stabilizes one strand of the AT-rich DNA unwinding element (DUE), permitting loading of DNA polymerase. After initiation quickly degrades to an ADP-DnaA complex that is not apt for DNA replication. Binds acidic phospholipids. The sequence is that of Chromosomal replication initiator protein DnaA from Yersinia pseudotuberculosis serotype O:1b (strain IP 31758).